Consider the following 344-residue polypeptide: UDP-N-acetylglucosamine transporter UGNT1 (344 aa).

Positions 1–23 are disordered; the sequence is MRNNPVLPVSDPPLAGENDSDGK. A run of 9 helical transmembrane segments spans residues 41–61, 66–86, 92–112, 114–134, 167–187, 194–214, 226–246, 264–284, and 304–324; these read YAAL…KAAL, FPCV…FLYA, IISF…FVPV, TLFH…ASMA, YTRS…FAGA, FYGY…LATI, FGLM…WTFI, FMVV…CIFL, and FTVG…MNVI.

This sequence belongs to the TPT transporter family. UGnT (TC 2.A.7.15) subfamily. As to expression, expressed in roots, leaves, stems, flowers and siliques.

It localises to the golgi apparatus membrane. In terms of biological role, mediates the transport of UDP-N-acetylglucosamine (UDP-GlcNAc) across the Golgi apparatus membrane. Delivers an essential substrate for the maturation of N-glycans and the GlcNAc-containing glycosyl inositol phosphorylceramide (GIPC) class of sphingolipids in the Golgi apparatus. The polypeptide is UDP-N-acetylglucosamine transporter UGNT1 (Arabidopsis thaliana (Mouse-ear cress)).